Here is a 929-residue protein sequence, read N- to C-terminus: uncharacterized protein (929 aa).

The tract at residues methionine 1 to serine 257 is disordered. Over residues lysine 23 to glutamate 34 the composition is skewed to basic and acidic residues. Acidic residues-rich tracts occupy residues glutamate 35 to glutamate 50, serine 59 to aspartate 75, leucine 107 to valine 117, aspartate 133 to leucine 144, and serine 188 to asparagine 220. Residues serine 251, serine 555, and serine 557 each carry the phosphoserine modification. Residues aspartate 602–lysine 729 are disordered. Positions glutamine 605–aspartate 619 are enriched in acidic residues. Basic and acidic residues predominate over residues asparagine 670–alanine 681. A compositionally biased stretch (polar residues) spans glutamate 696–alanine 711. Residues lysine 712–lysine 729 show a composition bias toward basic and acidic residues. 3 positions are modified to phosphoserine: serine 758, serine 760, and serine 764. A compositionally biased stretch (basic and acidic residues) spans lysine 805–serine 820. Positions lysine 805 to lysine 843 are disordered. Residues lysine 833 to lysine 843 are compositionally biased toward basic residues.

It to yeast YML093w.

The protein localises to the nucleus. It is found in the nucleolus. This is an uncharacterized protein from Schizosaccharomyces pombe (strain 972 / ATCC 24843) (Fission yeast).